Here is a 253-residue protein sequence, read N- to C-terminus: Large ribosomal subunit protein uL4 (253 aa).

The protein belongs to the universal ribosomal protein uL4 family. As to quaternary structure, part of the 50S ribosomal subunit.

One of the primary rRNA binding proteins, this protein initially binds near the 5'-end of the 23S rRNA. It is important during the early stages of 50S assembly. It makes multiple contacts with different domains of the 23S rRNA in the assembled 50S subunit and ribosome. Its function is as follows. Forms part of the polypeptide exit tunnel. The chain is Large ribosomal subunit protein uL4 from Methanococcoides burtonii (strain DSM 6242 / NBRC 107633 / OCM 468 / ACE-M).